A 388-amino-acid chain; its full sequence is 5-hydroxytryptamine receptor 1B (388 aa).

Residues 1-29 (MEQPSRLCSPPASGSLTSSQTNHSTFPNP) are disordered. Over 1-45 (MEQPSRLCSPPASGSLTSSQTNHSTFPNPNCSAPDLEPYQDSIAL) the chain is Extracellular. A compositionally biased stretch (polar residues) spans 12–29 (ASGSLTSSQTNHSTFPNP). 2 N-linked (GlcNAc...) asparagine glycosylation sites follow: Asn22 and Asn30. The helical transmembrane segment at 46-71 (PWKVLLATFLGLITLGTTLSNAFVIA) threads the bilayer. The Cytoplasmic segment spans residues 72 to 85 (TVSRTRKLHTPANY). A helical membrane pass occupies residues 86–110 (LIASLAVTDLLVSILVMPISTMYTV). The Extracellular segment spans residues 111 to 118 (TGRWTLGQ). The helical transmembrane segment at 119-144 (VVCDFWLSSDITCCTASILHLCVIAL) threads the bilayer. A disulfide bridge connects residues Cys121 and Cys197. Ergotamine is bound by residues Asp128 and Thr133. A DRY motif; important for ligand-induced conformation changes and signaling motif is present at residues 145–147 (DRY). Residues 145–164 (DRYWAITDAVEYSAKRTPKR) are Cytoplasmic-facing. Residues 165–183 (AAGMIIMVWVFSVSISMPP) traverse the membrane as a helical segment. Over 184–203 (LFWRQAKAEEVADCSVNTDH) the chain is Extracellular. Position 199 (Val199) interacts with ergotamine. The chain crosses the membrane as a helical span at residues 204–227 (ILYTVYSTVGAFYFPTLLLIALYG). The Cytoplasmic segment spans residues 228–313 (RIYVEARSRI…AARERKATRT (86 aa)). The disordered stretch occupies residues 249–282 (LTRAQLITDSPGSSSSGTSINSRAPEGPSESGSP). Residues 255 to 270 (ITDSPGSSSSGTSINS) show a composition bias toward low complexity. A helical membrane pass occupies residues 314–335 (LGIILGAFIVCWLPFFIISLAL). Over 336 to 345 (PICDDACWFH) the chain is Extracellular. A helical transmembrane segment spans residues 346–368 (LAIFDFFNWLGYLNSLINPIIYT). The NPxxY motif; important for ligand-induced conformation changes and signaling motif lies at 363 to 367 (NPIIY). Over 369–388 (KSNDDFKQAFQKLMRFRRTS) the chain is Cytoplasmic.

It belongs to the G-protein coupled receptor 1 family. Homodimer. Heterodimer with HTR1D. Phosphorylated. Desensitization of the receptor may be mediated by its phosphorylation. Post-translationally, palmitoylated.

The protein resides in the cell membrane. G-protein coupled receptor for 5-hydroxytryptamine (serotonin). Also functions as a receptor for ergot alkaloid derivatives, various anxiolytic and antidepressant drugs and other psychoactive substances, such as lysergic acid diethylamide (LSD). Ligand binding causes a conformation change that triggers signaling via guanine nucleotide-binding proteins (G proteins) and modulates the activity of downstream effectors, such as adenylate cyclase. HTR1B is coupled to G(i)/G(o) G alpha proteins and mediates inhibitory neurotransmission by inhibiting adenylate cyclase activity. Arrestin family members inhibit signaling via G proteins and mediate activation of alternative signaling pathways. Regulates the release of 5-hydroxytryptamine, dopamine and acetylcholine in the brain, and thereby affects neural activity, nociceptive processing, pain perception, mood and behavior. Besides, plays a role in vasoconstriction of cerebral arteries. This chain is 5-hydroxytryptamine receptor 1B (HTR1B), found in Didelphis virginiana (North American opossum).